The sequence spans 497 residues: Dihydrolipoyl dehydrogenase (497 aa).

Residues 60 to 69, Lys78, Gly142, and 170 to 172 each bind FAD; these read EKEPSLGGTC and TGS. Cys69 and Cys74 are disulfide-bonded. NAD(+)-binding positions include 207–214, Glu230, Val264, and Gly302; that span reads GAGVIGLE. FAD-binding positions include Asp343 and 349–352; that span reads MLAH. Residue His475 is the Proton acceptor of the active site.

The protein belongs to the class-I pyridine nucleotide-disulfide oxidoreductase family. In terms of assembly, homodimer. FAD serves as cofactor.

It localises to the cytoplasm. The catalysed reaction is N(6)-[(R)-dihydrolipoyl]-L-lysyl-[protein] + NAD(+) = N(6)-[(R)-lipoyl]-L-lysyl-[protein] + NADH + H(+). This Manduca sexta (Tobacco hawkmoth) protein is Dihydrolipoyl dehydrogenase.